The following is a 369-amino-acid chain: Methionine import ATP-binding protein MetN (369 aa).

Residues 31–266 (VEMKDVRRMF…PQSPVTQSML (236 aa)) enclose the ABC transporter domain. 63-70 (GRSGAGKS) is a binding site for ATP.

The protein belongs to the ABC transporter superfamily. Methionine importer (TC 3.A.1.24) family. In terms of assembly, the complex is composed of two ATP-binding proteins (MetN), two transmembrane proteins (MetI) and a solute-binding protein (MetQ).

Its subcellular location is the cell inner membrane. It carries out the reaction L-methionine(out) + ATP + H2O = L-methionine(in) + ADP + phosphate + H(+). It catalyses the reaction D-methionine(out) + ATP + H2O = D-methionine(in) + ADP + phosphate + H(+). In terms of biological role, part of the ABC transporter complex MetNIQ involved in methionine import. Responsible for energy coupling to the transport system. The chain is Methionine import ATP-binding protein MetN from Brucella abortus (strain 2308).